The sequence spans 699 residues: MNTFQASVSFQDVTVEFSQEEWQHMGPVERTLYRDVMLENYSHLVSVGYCFTKPELIFTLEQGEDPWLLEKEKGFLSRNSPEDSQPDEISEKSPENQGKHLLQVLFTNKLLTTEQEISGKPHNRDINIFRARMMPCKCDIAGSACQGLSLMAPHCQYSKEKAHERNVCDKWLISIKDGRTNTQEKSFAYSKIVKTLHHKEEVIQHQTIQTLGQDFEYNESRKAFLEKAALVTSNSTHPKGKSYNFNKFGENKYDKSTFIIPQNMNPEKSHYEFNDTGNCFCRITHKTLTGGKSFSQKSHIREHHRVHIGVKPFEYGKSFNRNSTLPVHQRTHATDKYSDYHPCTETFSYQSTFSVHQKVHIRAKPYEYNECGKSCSMNSHLIWPQKSHTGEKPYECPECGKAFSEKSRLRKHQRTHTGEKPYKCDGCDKAFSAKSGLRIHQRTHTGEKPFECHECGKSFNYKSILIVHQRTHTGEKPFECNECGKSFSHMSGLRNHRRTHTGERPYKCDECGKAFKLKSGLRKHHRTHTGEKPYKCNQCGKAFGQKSQLRGHHRIHTGEKPYKCNHCGEAFSQKSNLRVHHRTHTGEKPYQCEECGKTFRQKSNLRGHQRTHTGEKPYECNECGKAFSEKSVLRKHQRTHTGEKPYNCNQCGEAFSQKSNLRVHQRTHTGEKPYKCDKCGRTFSQKSSLREHQKAHPGD.

A KRAB domain is found at 8–79; that stretch reads VSFQDVTVEF…EKEKGFLSRN (72 aa). The segment at 75–95 is disordered; the sequence is FLSRNSPEDSQPDEISEKSPE. The C2H2-type 1; degenerate zinc-finger motif lies at 279-307; sequence CFCRITHKTLTGGKSFSQKSHIREHHRVH. The C2H2-type 2; degenerate zinc-finger motif lies at 316-332; it reads GKSFNRNSTLPVHQRTH. The C2H2-type 3; degenerate zinc finger occupies 337–360; sequence YSDYHPCTETFSYQSTFSVHQKVH. A C2H2-type 4; degenerate zinc finger spans residues 366–388; that stretch reads YEYNECGKSCSMNSHLIWPQKSH. 11 C2H2-type zinc fingers span residues 394–416, 422–444, 450–472, 478–500, 506–528, 534–556, 562–584, 590–612, 618–640, 646–668, and 674–696; these read YECP…QRTH, YKCD…QRTH, FECH…QRTH, FECN…RRTH, YKCD…HRTH, YKCN…HRIH, YKCN…HRTH, YQCE…QRTH, YECN…QRTH, YNCN…QRTH, and YKCD…QKAH.

The protein belongs to the krueppel C2H2-type zinc-finger protein family.

The protein resides in the nucleus. Its function is as follows. May be involved in transcriptional regulation. This Homo sapiens (Human) protein is Zinc finger protein 782 (ZNF782).